We begin with the raw amino-acid sequence, 56 residues long: Sec-independent protein translocase protein TatA (56 aa).

Residues 1-21 (MALGPWQIFLILVIILVLFGA) form a helical membrane-spanning segment.

Belongs to the TatA/E family. The Tat system comprises two distinct complexes: a TatABC complex, containing multiple copies of TatA, TatB and TatC subunits, and a separate TatA complex, containing only TatA subunits. Substrates initially bind to the TatABC complex, which probably triggers association of the separate TatA complex to form the active translocon.

The protein localises to the cell inner membrane. Part of the twin-arginine translocation (Tat) system that transports large folded proteins containing a characteristic twin-arginine motif in their signal peptide across membranes. TatA could form the protein-conducting channel of the Tat system. The chain is Sec-independent protein translocase protein TatA from Ehrlichia ruminantium (strain Welgevonden).